The primary structure comprises 61 residues: Bactridin-1 (61 aa).

The 61-residue stretch at 1 to 61 (KDGYIIEHRG…KIFDSNNLKC (61 aa)) folds into the LCN-type CS-alpha/beta domain. 4 cysteine pairs are disulfide-bonded: cysteine 11/cysteine 61, cysteine 15/cysteine 37, cysteine 23/cysteine 42, and cysteine 27/cysteine 44.

Belongs to the long (4 C-C) scorpion toxin superfamily. Sodium channel inhibitor family. Beta subfamily. In terms of tissue distribution, expressed by the venom gland.

The protein resides in the secreted. Its function is as follows. Shows antibacterial activity against both Gram-positive bacteria (B.subtilis, M.luteus, E.faecalis) and Gram-negative bacteria (P.aeruginosa, Y.enterocolitica, A.calcoaceticus). Modifies membrane sodium permeability on Y.enterocolitica. Is toxic to cockroaches and crabs, but is not toxic to mice. Does not induce haemolysis in human erythrocytes. Acts by inhibiting the sodium (Nav) currents. This Tityus discrepans (Venezuelan scorpion) protein is Bactridin-1.